The primary structure comprises 329 residues: Putative oligopeptide transport ATP-binding protein YkfD (329 aa).

The ABC transporter domain occupies 7 to 252; sequence LEVSQLKMHF…PLHPYTKALL (246 aa). Position 44–51 (44–51) interacts with ATP; sequence GESGCGKS.

This sequence belongs to the ABC transporter superfamily.

The polypeptide is Putative oligopeptide transport ATP-binding protein YkfD (ykfD) (Bacillus subtilis (strain 168)).